The following is a 264-amino-acid chain: Endonuclease V (264 aa).

Residues D72 and D137 each contribute to the Mg(2+) site.

This sequence belongs to the endonuclease V family. Mg(2+) serves as cofactor.

The protein localises to the cytoplasm. The catalysed reaction is Endonucleolytic cleavage at apurinic or apyrimidinic sites to products with a 5'-phosphate.. DNA repair enzyme involved in the repair of deaminated bases. Selectively cleaves double-stranded DNA at the second phosphodiester bond 3' to a deoxyinosine leaving behind the intact lesion on the nicked DNA. The protein is Endonuclease V of Halobacterium salinarum (strain ATCC 700922 / JCM 11081 / NRC-1) (Halobacterium halobium).